Here is a 223-residue protein sequence, read N- to C-terminus: Protein FAM3D (223 aa).

A signal peptide spans 1–25 (MRVAGLIRVVVFIFTIVTMWVFLRS). Cystine bridges form between Cys-54–Cys-82 and Cys-60–Cys-217. Residues 62–221 (NNFFAFKISS…LELEGCVPRK (160 aa)) form the GG-type lectin domain. A glycan (N-linked (GlcNAc...) asparagine) is linked at Asn-106.

It belongs to the FAM3 family.

It localises to the secreted. This Mus musculus (Mouse) protein is Protein FAM3D.